Here is a 406-residue protein sequence, read N- to C-terminus: Phosphopentomutase (406 aa).

The Mn(2+) site is built by aspartate 10, aspartate 305, histidine 310, aspartate 346, histidine 347, and histidine 358.

This sequence belongs to the phosphopentomutase family. Requires Mn(2+) as cofactor.

Its subcellular location is the cytoplasm. The catalysed reaction is 2-deoxy-alpha-D-ribose 1-phosphate = 2-deoxy-D-ribose 5-phosphate. It carries out the reaction alpha-D-ribose 1-phosphate = D-ribose 5-phosphate. Its pathway is carbohydrate degradation; 2-deoxy-D-ribose 1-phosphate degradation; D-glyceraldehyde 3-phosphate and acetaldehyde from 2-deoxy-alpha-D-ribose 1-phosphate: step 1/2. Its function is as follows. Isomerase that catalyzes the conversion of deoxy-ribose 1-phosphate (dRib-1-P) and ribose 1-phosphate (Rib-1-P) to deoxy-ribose 5-phosphate (dRib-5-P) and ribose 5-phosphate (Rib-5-P), respectively. This is Phosphopentomutase from Vibrio cholerae serotype O1 (strain ATCC 39315 / El Tor Inaba N16961).